Reading from the N-terminus, the 79-residue chain is Conotoxin MIVA (79 aa).

An N-terminal signal peptide occupies residues 1–21; that stretch reads MGMRMMFTVFLLVVLATTVVS. The propeptide occupies 22-38; that stretch reads IPSDRASDGRNAVVHER. The residue at position 40 (Pro-40) is a 4-hydroxyproline. Glu-41 carries the 4-carboxyglutamate modification. O-linked (HexNAc...) threonine glycans are attached at residues Thr-45 and Thr-47. A 4-hydroxyproline mark is found at Pro-55, Pro-60, Pro-61, Pro-69, Pro-70, and Pro-74. At Pro-74 the chain carries Proline amide. A propeptide spanning residues 75 to 79 is cleaved from the precursor; that stretch reads GRRND.

O-linked glycan consists of Hex4-HexNAc2 hexasaccharide. Post-translationally, contains 3 disulfide bonds. Expressed by the venom duct.

The protein resides in the secreted. Its function is as follows. Probable neurotoxin with ion channel inhibitor activity. This chain is Conotoxin MIVA, found in Conus magus (Magical cone).